We begin with the raw amino-acid sequence, 365 residues long: MAITATQNDGVSLNANKISYDLVETDVEIITSGRRSIPAHSGILASVSPVLTNIIEKPRKIHGGSSKKVIKILGVPCDAVSVFVRFLYSPSVTENEMEKYGIHLLALSHVYMVTQLKQRCTKGVGERVTAENVVDILQLARLCDAPDLCLKCMRFIHYKFKTVEQTEGWKFLQEHDPFLELDILQFIDDAESRKKRRRRHRREQNLYLQLSEAMECIEHICTEGCTLVGPSSNLDNKSTCQAKPGPCSAFSTCYGLQLLIRHFAVCKKRVDGKGCVRCKRMIQLLRLHSSICDQSESCRVPLCRQYKNRGEKDKKMVEDTKWKVLVRRVASAKAMSSLSQSKKKKSEVLFKEEAEDLIRIRNKLM.

One can recognise a BTB domain in the interval 25–96 (TDVEIITSGR…LYSPSVTENE (72 aa)). Positions 193–202 (RKKRRRRHRR) match the Nuclear localization signal motif. The TAZ-type zinc finger occupies 205-304 (NLYLQLSEAM…SESCRVPLCR (100 aa)). The caM-binding stretch occupies residues 315–338 (KMVEDTKWKVLVRRVASAKAMSSL).

As to quaternary structure, interacts with CUL3A. Interacts with GTE9/BET9 and GTE11/BET10 through the BTB domain. In terms of tissue distribution, preferentially expressed in young leaves, roots and stems.

The protein resides in the nucleus. The protein localises to the cytoplasm. It participates in protein modification; protein ubiquitination. Its function is as follows. May act as a substrate-specific adapter of an E3 ubiquitin-protein ligase complex (CUL3-RBX1-BTB) which mediates the ubiquitination and subsequent proteasomal degradation of target proteins. Also targeted for degradation by the 26S proteasome pathway. May be involved in gametophyte development. The polypeptide is BTB/POZ and TAZ domain-containing protein 1 (BT1) (Arabidopsis thaliana (Mouse-ear cress)).